A 473-amino-acid polypeptide reads, in one-letter code: H(+)/Cl(-) exchange transporter ClcA (473 aa).

Residues Met-1–Pro-32 lie on the Cytoplasmic side of the membrane. Residues Leu-33–Val-69 form a helical membrane-spanning segment. The Periplasmic segment spans residues Gln-70–Phe-76. Residues Leu-77–Phe-100 form a helical membrane-spanning segment. The Selectivity filter part_1 signature appears at Gly-106–Pro-110. Residue Ser-107 coordinates chloride. The helical intramembrane region spans Ile-109–Leu-116. Over Glu-117 to Arg-123 the chain is Cytoplasmic. Transmembrane regions (helical) follow at residues Trp-124 to Ala-141 and Glu-148 to Phe-166. Positions Gly-146–Pro-150 match the Selectivity filter part_2 motif. At Arg-167–Thr-176 the chain is on the cytoplasmic side. 2 consecutive intramembrane regions (helical) follow at residues Leu-177–Ala-189 and Pro-193–Ile-201. The Cytoplasmic segment spans residues Glu-202–Ser-214. Residues Ile-215–Phe-232 traverse the membrane as a helical segment. The Periplasmic portion of the chain corresponds to Asn-233–Leu-252. The helical transmembrane segment at Trp-253–Gln-281 threads the bilayer. Residues Arg-282–Glu-287 are Cytoplasmic-facing. The helical transmembrane segment at Ile-288–Glu-309 threads the bilayer. The Periplasmic segment spans residues Pro-310–Ser-329. The next 2 membrane-spanning stretches (helical) occupy residues Val-330–Ser-349 and Gly-355–Ala-376. The Selectivity filter part_3 motif lies at Gly-355–Pro-359. Chloride-binding residues include Ile-356 and Phe-357. The Periplasmic portion of the chain corresponds to Val-377–Ala-386. The segment at residues Gly-387–Ser-401 is an intramembrane region (helical). An intramembrane region (note=Loop between two helices) is located at residues Val-402–Ala-404. Residues Pro-405–Thr-416 constitute an intramembrane region (helical). The segment at residues Asp-417–Leu-421 is an intramembrane region (note=Loop between two helices). The chain crosses the membrane as a helical span at residues Ile-422–Phe-438. Residues Leu-439–Thr-473 are Cytoplasmic-facing. A chloride-binding site is contributed by Tyr-445.

This sequence belongs to the chloride channel (TC 2.A.49) family. ClcA subfamily. Homodimer.

The protein resides in the cell inner membrane. It catalyses the reaction 2 chloride(in) + H(+)(out) = 2 chloride(out) + H(+)(in). In terms of biological role, proton-coupled chloride transporter. Functions as antiport system and exchanges two chloride ions for 1 proton. Probably acts as an electrical shunt for an outwardly-directed proton pump that is linked to amino acid decarboxylation, as part of the extreme acid resistance (XAR) response. The protein is H(+)/Cl(-) exchange transporter ClcA of Salmonella newport (strain SL254).